A 194-amino-acid chain; its full sequence is WASH complex subunit 3 (194 aa).

Met-1 bears the N-acetylmethionine mark. A coiled-coil region spans residues Ala-46–Ser-74. 2 disordered regions span residues Val-94–Asn-126 and Ser-158–Asp-194. The span at Ser-98–Gln-113 shows a compositional bias: low complexity. The span at Asp-114–Asn-126 shows a compositional bias: polar residues.

Belongs to the CCDC53 family. In terms of assembly, component of the WASH core complex also described as WASH regulatory complex (SHRC) composed of WASHC1, WASHC2, WASHC3, WASHC4 and WASHC5. The WASH core complex associates via WASHC2 with the F-actin-capping protein dimer (formed by CAPZA1, CAPZA2 or CAPZA3 and CAPZB) in a transient or substoichiometric manner which was initially described as WASH complex.

It is found in the early endosome. Acts as a component of the WASH core complex that functions as a nucleation-promoting factor (NPF) at the surface of endosomes, where it recruits and activates the Arp2/3 complex to induce actin polymerization, playing a key role in the fission of tubules that serve as transport intermediates during endosome sortingg. The protein is WASH complex subunit 3 of Mus musculus (Mouse).